We begin with the raw amino-acid sequence, 271 residues long: Coiled-coil domain-containing protein ORF29 (271 aa).

A disordered region spans residues 1 to 39 (MNEKTESEIFEEQNSLYKPIKQEKKTPSTPESEDKNDQS). The span at 20–37 (IKQEKKTPSTPESEDKND) shows a compositional bias: basic and acidic residues. A coiled-coil region spans residues 208–228 (RATQTQEILLNSLRKNLQMLE).

In Helicobacter pylori (strain 35A), this protein is Coiled-coil domain-containing protein ORF29.